A 106-amino-acid polypeptide reads, in one-letter code: Large ribosomal subunit protein uL23 (106 aa).

The protein belongs to the universal ribosomal protein uL23 family. As to quaternary structure, part of the 50S ribosomal subunit. Contacts protein L29, and trigger factor when it is bound to the ribosome.

Its function is as follows. One of the early assembly proteins it binds 23S rRNA. One of the proteins that surrounds the polypeptide exit tunnel on the outside of the ribosome. Forms the main docking site for trigger factor binding to the ribosome. The sequence is that of Large ribosomal subunit protein uL23 from Acinetobacter baumannii (strain AB307-0294).